The chain runs to 37 residues: MKVRASVKKICDKCKIIKRKGIVRVICETPKHTQRQG.

Belongs to the bacterial ribosomal protein bL36 family.

In Geobacter metallireducens (strain ATCC 53774 / DSM 7210 / GS-15), this protein is Large ribosomal subunit protein bL36.